Consider the following 1779-residue polypeptide: Collagen alpha-1(IV) chain (1779 aa).

The first 23 residues, 1–23, serve as a signal peptide directing secretion; the sequence is MLPFWKRLLYAAVIAGALVGADA. Asn-72 carries an N-linked (GlcNAc...) asparagine glycan. Disordered regions lie at residues 89 to 643, 655 to 1187, 1200 to 1285, and 1336 to 1530; these read GNRG…KPAL, DKGY…LPGL, TGAP…IGPR, and GLPG…RGYE. Over residues 144–163 the composition is skewed to low complexity; that stretch reads QAGVPGVQGPAGNPGAPGIN. 2 stretches are compositionally biased toward basic and acidic residues: residues 196–217 and 249–259; these read KGEK…KGEP and PRGEHGLKGEK. Over residues 360-369 the composition is skewed to low complexity; sequence PGLNGLPGNP. The span at 434-443 shows a compositional bias: gly residues; it reads GQKGGAGLPG. Low complexity predominate over residues 531 to 545; that stretch reads GRPGTPGAAGAPGQK. The span at 724–747 shows a compositional bias: basic and acidic residues; sequence PGFHGRDGAKGDKGSFGRSGEKGE. 2 stretches are compositionally biased toward low complexity: residues 913-931 and 1015-1036; these read VGPI…PGID and PGLM…QGLD. A compositionally biased stretch (basic and acidic residues) spans 1106-1127; it reads EKGDQGRSGIDGRDGINGEKGE. Over residues 1151-1170 the composition is skewed to low complexity; it reads APGMDGLPGAAGAPGAVGYP. 3 stretches are compositionally biased toward basic and acidic residues: residues 1224 to 1245, 1496 to 1505, and 1517 to 1529; these read IRGD…EQGE, ERGEKGERGL, and PKGD…ERGY. The region spanning 1555–1778 is the Collagen IV NC1 domain; that stretch reads GILITRHSQS…SRCQVCMKNS (224 aa). Cystine bridges form between Cys-1570–Cys-1659, Cys-1603–Cys-1656, Cys-1615–Cys-1621, Cys-1678–Cys-1774, Cys-1712–Cys-1771, and Cys-1724–Cys-1731.

It belongs to the type IV collagen family. As to quaternary structure, trimers of two alpha 1(IV) and one alpha 2(IV) chain. Type IV collagen forms a mesh-like network linked through intermolecular interactions between 7S domains and between NC1 domains. Prolines at the third position of the tripeptide repeating unit (G-X-Y) are hydroxylated in some or all of the chains. Post-translationally, type IV collagens contain numerous cysteine residues which are involved in inter- and intramolecular disulfide bonding. 12 of these, located in the NC1 domain, are conserved in all known type IV collagens.

Its subcellular location is the secreted. It localises to the extracellular space. The protein resides in the extracellular matrix. It is found in the basement membrane. Its function is as follows. Collagen type IV is specific for basement membranes. This is Collagen alpha-1(IV) chain from Drosophila melanogaster (Fruit fly).